A 649-amino-acid chain; its full sequence is Pesticidal crystal protein Cry3Ca (649 aa).

The span at 1–13 (MNPNNRSEHDTIK) shows a compositional bias: basic and acidic residues. The segment at 1-29 (MNPNNRSEHDTIKATENNEVSNNHAQYPL) is disordered. Over residues 14-25 (ATENNEVSNNHA) the composition is skewed to polar residues.

This sequence belongs to the delta endotoxin family.

Its function is as follows. Promotes colloidosmotic lysis by binding to the midgut epithelial cells of Coleoptera. The chain is Pesticidal crystal protein Cry3Ca (cry3Ca) from Bacillus thuringiensis subsp. kurstaki.